The primary structure comprises 531 residues: Protein SHORT-ROOT (531 aa).

Residues 14–39 (QQSDSIITNQSSLSRTSTTTTGSPQT) are compositionally biased toward low complexity. Disordered regions lie at residues 14 to 40 (QQSD…PQTA) and 65 to 103 (SSSS…PSST). Over residues 81-93 (TYYSPFTTPTQYH) the composition is skewed to polar residues. Residues 94 to 103 (PATSSTPSST) show a composition bias toward low complexity. Positions 134-529 (FDFSANAKWA…QPVVWASAWR (396 aa)) constitute a GRAS domain. The leucine repeat I (LRI) stretch occupies residues 141-206 (KWADSVLLEA…GSGERCYRTM (66 aa)). Residues 225–290 (VLKFQEVSPW…DDTPHLRLTT (66 aa)) form a VHIID region. The VHIID signature appears at 256-260 (IHIVD). Residues 310 to 343 (EIGNRMEKFARLMGVPFKFNIIHHVGDLSEFDLN) form a leucine repeat II (LRII) region. The PFYRE stretch occupies residues 353 to 449 (LAINCVGAMH…ERAAGRAIVD (97 aa)). The SAW stretch occupies residues 452–529 (ACEPSDSTER…QPVVWASAWR (78 aa)).

This sequence belongs to the GRAS family. In terms of assembly, interacts with SCR, SCL23, JKD and MGP. Interacts with SIEL. Association to endosomes and intercellular movement of SHR rely on the interaction with SIEL. Expressed in the stele and the quiescent center. Not detected in the ground tissue cell lineage. The SHR protein moves from the stele to a single layer of adjacent cells, where it enters the nucleus.

Its subcellular location is the cytoplasm. It is found in the nucleus. The protein resides in the early endosome. It localises to the late endosome. The protein localises to the recycling endosome. Functionally, transcription factor required for quiescent center cells specification and maintenance of surrounding stem cells, and for the asymmetric cell division involved in radial pattern formation in roots. Essential for both cell division and cell specification. Regulates the radial organization of the shoot axial organs and is required for normal shoot gravitropism. Directly controls the transcription of SCR, and when associated with SCR, of MGP, RLK, TRI, NUC and SCL3. This Arabidopsis thaliana (Mouse-ear cress) protein is Protein SHORT-ROOT.